The chain runs to 101 residues: Small ribosomal subunit protein uS14 (101 aa).

It belongs to the universal ribosomal protein uS14 family. Part of the 30S ribosomal subunit. Contacts proteins S3 and S10.

Binds 16S rRNA, required for the assembly of 30S particles and may also be responsible for determining the conformation of the 16S rRNA at the A site. The protein is Small ribosomal subunit protein uS14 of Pseudoalteromonas translucida (strain TAC 125).